A 372-amino-acid chain; its full sequence is Cytochrome b (372 aa).

4 helical membrane-spanning segments follow: residues 25–45 (FGSMLLTCSALQIMTGFFLSM), 69–90 (WMMQNLHAIGASMFFICVYIHV), 105–125 (WLSGTTLLIMLMATAFFGYVL), and 170–190 (FFALHFILPFGIISLSSLHIM). Residues His75 and His89 each coordinate heme b. Residues His174 and His188 each contribute to the heme b site. Residue His193 participates in a ubiquinone binding. Transmembrane regions (helical) follow at residues 218 to 238 (YKDLFMISSMIMIMLLTISFI), 280 to 300 (LGGALALAMSIMILLTVPFTH), 312 to 332 (FMQLMFWTLVATFMIITWTAT), and 339 to 358 (YTMISQVTSSLYFMFFMSNP).

The protein belongs to the cytochrome b family. As to quaternary structure, the cytochrome bc1 complex contains 3 respiratory subunits (MT-CYB, CYC1 and UQCRFS1), 2 core proteins (UQCRC1 and UQCRC2) and probably 6 low-molecular weight proteins. Requires heme b as cofactor.

The protein resides in the mitochondrion inner membrane. Its function is as follows. Component of the ubiquinol-cytochrome c reductase complex (complex III or cytochrome b-c1 complex) that is part of the mitochondrial respiratory chain. The b-c1 complex mediates electron transfer from ubiquinol to cytochrome c. Contributes to the generation of a proton gradient across the mitochondrial membrane that is then used for ATP synthesis. This is Cytochrome b (MT-CYB) from Acrantophis madagascariensis (Madagascar ground boa).